The sequence spans 421 residues: Testin (421 aa).

The PET domain occupies 92–199 (MILTNPVAAK…GDVKLPCEMD (108 aa)). The interval 133-164 (EKQPVAGSEGAQYRKKQLAKQLPAHDQDPSKC) is disordered. Positions 155 to 164 (PAHDQDPSKC) are enriched in basic and acidic residues. 3 consecutive LIM zinc-binding domains span residues 234–297 (YSCY…CDSE), 299–359 (PRCA…NHAV), and 362–421 (QGCH…KMMS).

This sequence belongs to the prickle / espinas / testin family. As to quaternary structure, interacts via LIM domain 1 with ZYX. Interacts (via LIM domain 3) with ENAH and VASP. Interacts with ALKBH4, talin, actin, alpha-actinin, GRIP1 and PXN. Interacts (via LIM domain 2) with ACTL7A (via N-terminus). Heterodimer with ACTL7A; the heterodimer interacts with ENAH to form a heterotrimer.

Its subcellular location is the cytoplasm. It localises to the cell junction. It is found in the focal adhesion. Scaffold protein that may play a role in cell adhesion, cell spreading and in the reorganization of the actin cytoskeleton. Plays a role in the regulation of cell proliferation. May act as a tumor suppressor. The protein is Testin (TES) of Saimiri boliviensis boliviensis (Bolivian squirrel monkey).